Here is a 271-residue protein sequence, read N- to C-terminus: Putative pyruvate, phosphate dikinase regulatory protein (271 aa).

150–157 (GVSRTSKT) provides a ligand contact to ADP.

This sequence belongs to the pyruvate, phosphate/water dikinase regulatory protein family. PDRP subfamily.

The catalysed reaction is N(tele)-phospho-L-histidyl/L-threonyl-[pyruvate, phosphate dikinase] + ADP = N(tele)-phospho-L-histidyl/O-phospho-L-threonyl-[pyruvate, phosphate dikinase] + AMP + H(+). It carries out the reaction N(tele)-phospho-L-histidyl/O-phospho-L-threonyl-[pyruvate, phosphate dikinase] + phosphate + H(+) = N(tele)-phospho-L-histidyl/L-threonyl-[pyruvate, phosphate dikinase] + diphosphate. Bifunctional serine/threonine kinase and phosphorylase involved in the regulation of the pyruvate, phosphate dikinase (PPDK) by catalyzing its phosphorylation/dephosphorylation. The chain is Putative pyruvate, phosphate dikinase regulatory protein from Oceanobacillus iheyensis (strain DSM 14371 / CIP 107618 / JCM 11309 / KCTC 3954 / HTE831).